The sequence spans 255 residues: Pyrroloquinoline-quinone synthase (255 aa).

The protein belongs to the PqqC family.

The enzyme catalyses 6-(2-amino-2-carboxyethyl)-7,8-dioxo-1,2,3,4,7,8-hexahydroquinoline-2,4-dicarboxylate + 3 O2 = pyrroloquinoline quinone + 2 H2O2 + 2 H2O + H(+). Its pathway is cofactor biosynthesis; pyrroloquinoline quinone biosynthesis. Ring cyclization and eight-electron oxidation of 3a-(2-amino-2-carboxyethyl)-4,5-dioxo-4,5,6,7,8,9-hexahydroquinoline-7,9-dicarboxylic-acid to PQQ. The chain is Pyrroloquinoline-quinone synthase from Granulibacter bethesdensis (strain ATCC BAA-1260 / CGDNIH1).